Consider the following 436-residue polypeptide: Trigger factor (436 aa).

The 86-residue stretch at 163-248 (GDRVTVDFEG…VKKIEAANLP (86 aa)) folds into the PPIase FKBP-type domain.

This sequence belongs to the FKBP-type PPIase family. Tig subfamily.

Its subcellular location is the cytoplasm. The catalysed reaction is [protein]-peptidylproline (omega=180) = [protein]-peptidylproline (omega=0). Involved in protein export. Acts as a chaperone by maintaining the newly synthesized protein in an open conformation. Functions as a peptidyl-prolyl cis-trans isomerase. This chain is Trigger factor, found in Delftia acidovorans (strain DSM 14801 / SPH-1).